The primary structure comprises 196 residues: Pro-FMRFamide-related neuropeptide VF (196 aa).

Residues 1–26 (MEIISSKLFILLTLATSSLLTSNIFC) form the signal peptide. Residues 27–55 (ADELVMSNLHSKENYDKYSEPRGYPKGER) constitute a propeptide that is removed on maturation. Phenylalanine amide is present on F92. Propeptides lie at residues 95-99 (NVQEE) and 115-121 (NMEVSLV). F131 is subject to Phenylalanine amide. Positions 134–196 (TTTAKSVCRM…IDDAELKQEK (63 aa)) are excised as a propeptide.

This sequence belongs to the FARP (FMRFamide related peptide) family. Specifically expressed in the retina. In terms of tissue distribution, detected in the hypothalamus.

It is found in the secreted. Functionally, efficiently inhibits forskolin-induced production of cAMP. Acts as a potent negative regulator of gonadotropin synthesis and secretion. Induces secretion of prolactin. Efficiently inhibits forskolin-induced production of cAMP. Blocks morphine-induced analgesia. Its function is as follows. Shows no inhibitory activity of forskolin-induced production of cAMP. The protein is Pro-FMRFamide-related neuropeptide VF of Homo sapiens (Human).